The following is a 116-amino-acid chain: Large ribosomal subunit protein bL17 (116 aa).

Belongs to the bacterial ribosomal protein bL17 family. Part of the 50S ribosomal subunit. Contacts protein L32.

The polypeptide is Large ribosomal subunit protein bL17 (Nostoc punctiforme (strain ATCC 29133 / PCC 73102)).